A 144-amino-acid polypeptide reads, in one-letter code: Probable 4-amino-4-deoxy-L-arabinose-phosphoundecaprenol flippase subunit ArnF (144 aa).

The Cytoplasmic segment spans residues 1–6 (MTHRRA). Residues 7-24 (TLCAMASVALVSAAQLGM) form a helical membrane-spanning segment. Topologically, residues 25–56 (RWSMSRLPSPVQWLEMQEHAQLDLSALRVVCA) are periplasmic. A helical membrane pass occupies residues 57 to 77 (SITAYALSMLFWLLALRVLPL). Topologically, residues 78-80 (SRA) are cytoplasmic. A helical transmembrane segment spans residues 81 to 101 (YSLLSISYALVYTLAATLPFF). At 102 to 104 (HET) the chain is on the periplasmic side. Residues 105-125 (FTVSKTVGVSLIVAGVLTINL) form a helical membrane-spanning segment. Over 126–144 (RRLPRPSPQDLSHENQRFR) the chain is Cytoplasmic.

This sequence belongs to the ArnF family. Heterodimer of ArnE and ArnF.

It is found in the cell inner membrane. Its pathway is bacterial outer membrane biogenesis; lipopolysaccharide biosynthesis. Functionally, translocates 4-amino-4-deoxy-L-arabinose-phosphoundecaprenol (alpha-L-Ara4N-phosphoundecaprenol) from the cytoplasmic to the periplasmic side of the inner membrane. This is Probable 4-amino-4-deoxy-L-arabinose-phosphoundecaprenol flippase subunit ArnF from Pseudomonas syringae pv. syringae (strain B728a).